The following is a 430-amino-acid chain: Adenylosuccinate synthetase (430 aa).

GTP contacts are provided by residues 12–18 (GDEGKGK) and 40–42 (GHT). Asp13 serves as the catalytic Proton acceptor. Residues Asp13 and Gly40 each coordinate Mg(2+). IMP contacts are provided by residues 13 to 16 (DEGK), 38 to 41 (NAGH), Thr130, Arg144, Gln224, Thr239, and Arg303. His41 serves as the catalytic Proton donor. 299 to 305 (VNTGRKR) contributes to the substrate binding site. GTP is bound by residues Arg305, 331-333 (KLD), and 413-415 (STS).

Belongs to the adenylosuccinate synthetase family. Homodimer. Mg(2+) serves as cofactor.

It is found in the cytoplasm. The enzyme catalyses IMP + L-aspartate + GTP = N(6)-(1,2-dicarboxyethyl)-AMP + GDP + phosphate + 2 H(+). It functions in the pathway purine metabolism; AMP biosynthesis via de novo pathway; AMP from IMP: step 1/2. Its function is as follows. Plays an important role in the de novo pathway of purine nucleotide biosynthesis. Catalyzes the first committed step in the biosynthesis of AMP from IMP. The protein is Adenylosuccinate synthetase of Rhodopseudomonas palustris (strain BisA53).